The sequence spans 121 residues: Large ribosomal subunit protein bL12 (121 aa).

The protein belongs to the bacterial ribosomal protein bL12 family. Homodimer. Part of the ribosomal stalk of the 50S ribosomal subunit. Forms a multimeric L10(L12)X complex, where L10 forms an elongated spine to which 2 to 4 L12 dimers bind in a sequential fashion. Binds GTP-bound translation factors.

Functionally, forms part of the ribosomal stalk which helps the ribosome interact with GTP-bound translation factors. Is thus essential for accurate translation. This Pediococcus pentosaceus (strain ATCC 25745 / CCUG 21536 / LMG 10740 / 183-1w) protein is Large ribosomal subunit protein bL12.